Here is a 940-residue protein sequence, read N- to C-terminus: Protein translocase subunit SecA (940 aa).

ATP-binding positions include Q85, G103–T107, and D505. The segment at P851–K940 is disordered. The segment covering G855–G865 has biased composition (basic and acidic residues). The span at R928–K940 shows a compositional bias: basic residues.

This sequence belongs to the SecA family. As to quaternary structure, monomer and homodimer. Part of the essential Sec protein translocation apparatus which comprises SecA, SecYEG and auxiliary proteins SecDF. Other proteins may also be involved.

The protein resides in the cell membrane. It is found in the cytoplasm. It carries out the reaction ATP + H2O + cellular proteinSide 1 = ADP + phosphate + cellular proteinSide 2.. In terms of biological role, part of the Sec protein translocase complex. Interacts with the SecYEG preprotein conducting channel. Has a central role in coupling the hydrolysis of ATP to the transfer of proteins into and across the cell membrane, serving as an ATP-driven molecular motor driving the stepwise translocation of polypeptide chains across the membrane. The chain is Protein translocase subunit SecA from Streptomyces griseus.